The chain runs to 157 residues: Capsid protein (157 aa).

N-acetylserine; by host is present on Ser2.

This sequence belongs to the virgaviridae capsid protein family.

The protein resides in the virion. Functionally, capsid protein self-assembles to form rod-shaped virions about 18 nm in diameter with a central canal enclosing the viral genomic RNA. The polypeptide is Capsid protein (CP) (Ribgrass mosaic virus (RMV)).